The sequence spans 119 residues: NADH-quinone oxidoreductase subunit A (119 aa).

Transmembrane regions (helical) follow at residues 7–27 (YPVL…VSIG), 63–83 (LVAI…PWGV), and 88–108 (IGWP…LGFA).

Belongs to the complex I subunit 3 family. As to quaternary structure, NDH-1 is composed of 14 different subunits. Subunits NuoA, H, J, K, L, M, N constitute the membrane sector of the complex.

It is found in the cell inner membrane. The catalysed reaction is a quinone + NADH + 5 H(+)(in) = a quinol + NAD(+) + 4 H(+)(out). NDH-1 shuttles electrons from NADH, via FMN and iron-sulfur (Fe-S) centers, to quinones in the respiratory chain. The immediate electron acceptor for the enzyme in this species is believed to be ubiquinone. Couples the redox reaction to proton translocation (for every two electrons transferred, four hydrogen ions are translocated across the cytoplasmic membrane), and thus conserves the redox energy in a proton gradient. The sequence is that of NADH-quinone oxidoreductase subunit A from Burkholderia ambifaria (strain MC40-6).